The chain runs to 213 residues: Ion-translocating oxidoreductase complex subunit A (213 aa).

Over 1 to 24 (MLLLWQSRIMPGSEANIYITMTEY) the chain is Periplasmic. Residues 25–45 (LLLLIGTVLVNNFVLVKFLGL) traverse the membrane as a helical segment. The Cytoplasmic segment spans residues 46-58 (CPFMGVSKKLETA). A helical transmembrane segment spans residues 59–79 (IGMGLATTFVLTLASVCAYLV). At 80-86 (ESYVLRP) the chain is on the periplasmic side. The chain crosses the membrane as a helical span at residues 87-107 (LGIEYLRTMSFILVIAVVVQF). The Cytoplasmic segment spans residues 108–121 (TEMVVHKTSPTLYR). A helical transmembrane segment spans residues 122–142 (LLGIFLPLITTNCAVLGVALL). The Periplasmic segment spans residues 143-153 (NINENHNFIQS). A helical transmembrane segment spans residues 154 to 174 (IIYGFGAAVGFSLVLILFASM). Residues 175–190 (RERIHVADVPAPFKGA) are Cytoplasmic-facing. Residues 191–211 (SIAMITAGLMSLAFMGFTGLV) form a helical membrane-spanning segment. Over 212–213 (KL) the chain is Periplasmic.

Belongs to the NqrDE/RnfAE family. The complex is composed of six subunits: RnfA, RnfB, RnfC, RnfD, RnfE and RnfG.

The protein resides in the cell inner membrane. Its function is as follows. Part of a membrane-bound complex that couples electron transfer with translocation of ions across the membrane. In Vibrio cholerae serotype O1 (strain ATCC 39541 / Classical Ogawa 395 / O395), this protein is Ion-translocating oxidoreductase complex subunit A.